We begin with the raw amino-acid sequence, 151 residues long: Ribosome maturation factor RimP (151 aa).

This sequence belongs to the RimP family.

The protein localises to the cytoplasm. Its function is as follows. Required for maturation of 30S ribosomal subunits. In Vibrio cholerae serotype O1 (strain ATCC 39541 / Classical Ogawa 395 / O395), this protein is Ribosome maturation factor RimP.